A 93-amino-acid polypeptide reads, in one-letter code: MEFYLEIDPVTLNLIILVASYVILLLVFLISCVLYDCRGKDPSKEYAPEATLEAQPSIRLVVMHPSVAGPHWPKGPGLSLGDPAPLGKKSTMV.

Residues 14 to 34 (LIILVASYVILLLVFLISCVL) traverse the membrane as a helical segment. The interval 73-93 (PKGPGLSLGDPAPLGKKSTMV) is disordered.

It is found in the membrane. This chain is Small integral membrane protein 36, found in Homo sapiens (Human).